The chain runs to 683 residues: Dixin (683 aa).

Leu-2 carries N-myristoyl glycine lipidation. The Calponin-homology (CH) domain maps to 20-127; that stretch reads EQQLQAYVAW…LVLALAAHFK (108 aa). Residues 127 to 300 form an actin-binding region; it reads KPGSSRTVNQ…LEKEMEEAKK (174 aa). Ser-186 carries the phosphoserine modification. The segment at 207–235 is disordered; the sequence is GQQRSPSESSCSSLTSPSPIHSAKSESII. The span at 211–228 shows a compositional bias: low complexity; that stretch reads SPSESSCSSLTSPSPIHS. Position 231 is a phosphoserine (Ser-231). Positions 279-452 form a coiled coil; the sequence is SWEEQLLEQQ…EALRKLSDVS (174 aa). A compositionally biased stretch (polar residues) spans 482 to 492; sequence NYNSHNSQSNG. Disordered regions lie at residues 482–509 and 556–594; these read NYNSHNSQSNGFLLPTAGKGATSVSNRG and TQKKQERKVRVKSPRTQVGSEYRESWPPNSKLPHSQSSP. The residue at position 590 (Ser-590) is a Phosphoserine. Positions 600-680 constitute a DIX domain; the sequence is CTKVLYFTDR…KIVAWVEEDH (81 aa).

This sequence belongs to the DIXDC1 family. Isoform 1 but not isoform 2 binds filamentous actin. Interacts with the complex composed of DVL2 and Rac. Interacts with AXIN1; competes with MAP3K1. Interacts with MAP3K4 preventing MAP3K4 interaction with AXIN1. Directly interacts (via DIX domain) with DVL2 (via DIX domain). Interacts with gamma-tubulin. Phosphorylated on tyrosine and serine residues. In terms of processing, polyubiquitinated, leading to its proteasomal degradation. WNT3A signaling increases DIXDC1 protein levels by inhibiting its ubiquitination and subsequent degradation. As to expression, ubiquitously expressed with higher expression in cardiac and skeletal muscles.

It is found in the cell junction. It localises to the focal adhesion. The protein localises to the cytoplasm. The protein resides in the cytoskeleton. Its subcellular location is the stress fiber. In terms of biological role, positive effector of the Wnt signaling pathway; activates WNT3A signaling via DVL2. Regulates JNK activation by AXIN1 and DVL2. This is Dixin (DIXDC1) from Homo sapiens (Human).